The primary structure comprises 410 residues: Translation initiation factor 2 subunit gamma (410 aa).

Residues 6 to 203 (QSEVNIGMVG…AIQEFIPTPK (198 aa)) enclose the tr-type G domain. The G1 stretch occupies residues 15–22 (GHVDHGKT). 4 residues coordinate Mg(2+): D18, T22, G43, and S45. Residue 18-23 (DHGKTS) participates in GTP binding. Positions 43 to 47 (GISIR) are G2. The Zn(2+) site is built by C58, C61, C73, and C76. Positions 90-93 (DAPG) are G3. GTP-binding positions include 146 to 149 (NKID) and 181 to 183 (SAH). The G4 stretch occupies residues 146-149 (NKID). A G5 region spans residues 181 to 183 (SAH).

This sequence belongs to the TRAFAC class translation factor GTPase superfamily. Classic translation factor GTPase family. EIF2G subfamily. In terms of assembly, heterotrimer composed of an alpha, a beta and a gamma chain. Requires Mg(2+) as cofactor.

It catalyses the reaction GTP + H2O = GDP + phosphate + H(+). Functionally, eIF-2 functions in the early steps of protein synthesis by forming a ternary complex with GTP and initiator tRNA. The protein is Translation initiation factor 2 subunit gamma of Methanococcus vannielii (strain ATCC 35089 / DSM 1224 / JCM 13029 / OCM 148 / SB).